The primary structure comprises 89 residues: Small ribosomal subunit protein uS15 (89 aa).

This sequence belongs to the universal ribosomal protein uS15 family. Part of the 30S ribosomal subunit. Forms a bridge to the 50S subunit in the 70S ribosome, contacting the 23S rRNA.

In terms of biological role, one of the primary rRNA binding proteins, it binds directly to 16S rRNA where it helps nucleate assembly of the platform of the 30S subunit by binding and bridging several RNA helices of the 16S rRNA. Its function is as follows. Forms an intersubunit bridge (bridge B4) with the 23S rRNA of the 50S subunit in the ribosome. In Erwinia tasmaniensis (strain DSM 17950 / CFBP 7177 / CIP 109463 / NCPPB 4357 / Et1/99), this protein is Small ribosomal subunit protein uS15.